The chain runs to 87 residues: Protein L (87 aa).

Its function is as follows. This protein inhibits the multiplication of double-stranded DNA phages, such as P1 and lambda. The chain is Protein L (L) from Escherichia coli.